The sequence spans 252 residues: Probable transcriptional regulatory protein Ava_1228 (252 aa).

The protein belongs to the TACO1 family.

The protein localises to the cytoplasm. This Trichormus variabilis (strain ATCC 29413 / PCC 7937) (Anabaena variabilis) protein is Probable transcriptional regulatory protein Ava_1228.